The sequence spans 483 residues: Regulatory protein ViaA (483 aa).

The protein belongs to the ViaA family. Homodimer. Interacts with RavA.

It is found in the cytoplasm. Its function is as follows. Component of the RavA-ViaA chaperone complex, which may act on the membrane to optimize the function of some of the respiratory chains. ViaA stimulates the ATPase activity of RavA. In Salmonella typhi, this protein is Regulatory protein ViaA.